The chain runs to 177 residues: Nucleoside triphosphate/diphosphate phosphatase (177 aa).

The active-site Proton donor is arginine 23. Residues asparagine 87, aspartate 103, aspartate 105, aspartate 107, aspartate 120, and glutamate 123 each contribute to the Mg(2+) site.

It belongs to the Ntdp family. It depends on Mg(2+) as a cofactor.

It carries out the reaction a ribonucleoside 5'-triphosphate + H2O = a ribonucleoside 5'-diphosphate + phosphate + H(+). The catalysed reaction is a ribonucleoside 5'-diphosphate + H2O = a ribonucleoside 5'-phosphate + phosphate + H(+). In terms of biological role, has nucleoside phosphatase activity towards nucleoside triphosphates and nucleoside diphosphates. The sequence is that of Nucleoside triphosphate/diphosphate phosphatase from Streptococcus thermophilus (strain CNRZ 1066).